Reading from the N-terminus, the 301-residue chain is ATP synthase gamma chain (301 aa).

This sequence belongs to the ATPase gamma chain family. As to quaternary structure, F-type ATPases have 2 components, CF(1) - the catalytic core - and CF(0) - the membrane proton channel. CF(1) has five subunits: alpha(3), beta(3), gamma(1), delta(1), epsilon(1). CF(0) has three main subunits: a, b and c.

Its subcellular location is the cell inner membrane. Its function is as follows. Produces ATP from ADP in the presence of a proton gradient across the membrane. The gamma chain is believed to be important in regulating ATPase activity and the flow of protons through the CF(0) complex. This Bordetella avium (strain 197N) protein is ATP synthase gamma chain.